The chain runs to 188 residues: Ribosome maturation factor RimM (188 aa).

Residues 96–169 (DDEFYYADLE…TLLIDPLAAG (74 aa)) enclose the PRC barrel domain.

The protein belongs to the RimM family. Binds ribosomal protein uS19.

It localises to the cytoplasm. Its function is as follows. An accessory protein needed during the final step in the assembly of 30S ribosomal subunit, possibly for assembly of the head region. Essential for efficient processing of 16S rRNA. May be needed both before and after RbfA during the maturation of 16S rRNA. It has affinity for free ribosomal 30S subunits but not for 70S ribosomes. This Rhizobium etli (strain ATCC 51251 / DSM 11541 / JCM 21823 / NBRC 15573 / CFN 42) protein is Ribosome maturation factor RimM.